The sequence spans 265 residues: Nitrogenase iron protein 2 (265 aa).

Residue 8 to 15 participates in ATP binding; sequence GKGGIGKS. Cysteine 91 contributes to the [4Fe-4S] cluster binding site. Residue arginine 94 is modified to ADP-ribosylarginine; by dinitrogenase reductase ADP-ribosyltransferase. Residue cysteine 126 coordinates [4Fe-4S] cluster.

The protein belongs to the NifH/BchL/ChlL family. As to quaternary structure, homodimer. The cofactor is [4Fe-4S] cluster. The reversible ADP-ribosylation of Arg-94 inactivates the nitrogenase reductase and regulates nitrogenase activity.

It catalyses the reaction N2 + 8 reduced [2Fe-2S]-[ferredoxin] + 16 ATP + 16 H2O = H2 + 8 oxidized [2Fe-2S]-[ferredoxin] + 2 NH4(+) + 16 ADP + 16 phosphate + 6 H(+). Functionally, the key enzymatic reactions in nitrogen fixation are catalyzed by the nitrogenase complex, which has 2 components: the iron protein and the molybdenum-iron protein. The sequence is that of Nitrogenase iron protein 2 (nifH2) from Methanothermobacter thermautotrophicus (strain ATCC 29096 / DSM 1053 / JCM 10044 / NBRC 100330 / Delta H) (Methanobacterium thermoautotrophicum).